Here is a 550-residue protein sequence, read N- to C-terminus: MEDAKNIKKGPAPFYPLEDGTAGEQLHKAMKRYALVPGTIAFTDAHIEVNITYAEYFEMSVRLAEAMKRYGLNTNHRIVVCSENSLQFFMPVLGALFIGVAVAPANDIYNERELLNSMNISQPTVVFVSKKGLQKILNVQKKLPIIQKIIIMDSKTDYQGFQSMYTFVTSHLPPGFNEYDFVPESFDRDKTIALIMNSSGSTGLPKGVALPHRTACVRFSHARDPIFGNQIIPDTAILSVVPFHHGFGMFTTLGYLICGFRVVLMYRFEEELFLRSLQDYKIQSALLVPTLFSFFAKSTLIDKYDLSNLHEIASGGAPLSKEVGEAVAKRFHLPGIRQGYGLTETTSAILITPEGDDKPGAVGKVVPFFEAKVVDLDTGKTLGVNQRGELCVRGPMIMSGYVNNPEATNALIDKDGWLHSGDIAYWDEDEHFFIVDRLKSLIKYKGYQVAPAELESILLQHPNIFDAGVAGLPDDDAGELPAAVVVLEHGKTMTEKEIVDYVASQVTTAKKLRGGVVFVDEVPKGLTGKLDARKIREILIKAKKGGKSKL.

Residues 548–550 (SKL) carry the Microbody targeting signal motif.

The protein belongs to the ATP-dependent AMP-binding enzyme family. Mg(2+) serves as cofactor.

The protein resides in the peroxisome. It catalyses the reaction firefly D-luciferin + ATP + O2 = firefly oxyluciferin + hnu + AMP + CO2 + diphosphate. Produces green light with a wavelength of 562 nm. This chain is Luciferin 4-monooxygenase, found in Photinus pyralis (Common eastern firefly).